A 533-amino-acid polypeptide reads, in one-letter code: Glycogen synthase (533 aa).

Lys-12 is a binding site for ADP-alpha-D-glucose. Residues 497–533 (AALARADAASGRRRRAPEQSERLRQERLARQVALASK) form a disordered region. Over residues 512 to 525 (APEQSERLRQERLA) the composition is skewed to basic and acidic residues.

The protein belongs to the glycosyltransferase 1 family. Bacterial/plant glycogen synthase subfamily.

It catalyses the reaction [(1-&gt;4)-alpha-D-glucosyl](n) + ADP-alpha-D-glucose = [(1-&gt;4)-alpha-D-glucosyl](n+1) + ADP + H(+). It functions in the pathway glycan biosynthesis; glycogen biosynthesis. Synthesizes alpha-1,4-glucan chains using ADP-glucose. The sequence is that of Glycogen synthase from Burkholderia thailandensis (strain ATCC 700388 / DSM 13276 / CCUG 48851 / CIP 106301 / E264).